A 331-amino-acid polypeptide reads, in one-letter code: 6-phosphogluconolactonase (331 aa).

This sequence belongs to the cycloisomerase 2 family.

The catalysed reaction is 6-phospho-D-glucono-1,5-lactone + H2O = 6-phospho-D-gluconate + H(+). It participates in carbohydrate degradation; pentose phosphate pathway; D-ribulose 5-phosphate from D-glucose 6-phosphate (oxidative stage): step 2/3. In terms of biological role, catalyzes the hydrolysis of 6-phosphogluconolactone to 6-phosphogluconate. The sequence is that of 6-phosphogluconolactonase from Salmonella arizonae (strain ATCC BAA-731 / CDC346-86 / RSK2980).